Reading from the N-terminus, the 172-residue chain is uncharacterized protein (172 aa).

This is an uncharacterized protein from Macaca mulatta (Rhesus macaque).